Reading from the N-terminus, the 425-residue chain is Histidine--tRNA ligase (425 aa).

It belongs to the class-II aminoacyl-tRNA synthetase family. In terms of assembly, homodimer.

Its subcellular location is the cytoplasm. The enzyme catalyses tRNA(His) + L-histidine + ATP = L-histidyl-tRNA(His) + AMP + diphosphate + H(+). In Shewanella oneidensis (strain ATCC 700550 / JCM 31522 / CIP 106686 / LMG 19005 / NCIMB 14063 / MR-1), this protein is Histidine--tRNA ligase.